We begin with the raw amino-acid sequence, 551 residues long: Probable 4-coumarate--CoA ligase 1 (551 aa).

Ser-205, Ser-206, Gly-207, Thr-208, Thr-209, and Lys-213 together coordinate ATP. Tyr-253 provides a ligand contact to (E)-4-coumaroyl-AMP. Lys-274 is a CoA binding site. Positions 276–346 (EPVRFLELIQ…RFKGRLVIKQ (71 aa)) are SBD1. Residues Ala-323, Gln-346, Gly-347, and Thr-351 each contribute to the (E)-4-coumaroyl-AMP site. The ATP site is built by Gln-346, Gly-347, Thr-351, Asp-430, and Arg-445. The interval 347–409 (GYGATELSPA…IKGPNVMLGY (63 aa)) is SBD2. Residues Lys-447 and Lys-451 each coordinate (E)-4-coumaroyl-AMP. CoA contacts are provided by Lys-453 and Gly-454. Lys-537 serves as a coordination point for ATP.

It belongs to the ATP-dependent AMP-binding enzyme family. It depends on Mg(2+) as a cofactor.

The enzyme catalyses (E)-4-coumarate + ATP + CoA = (E)-4-coumaroyl-CoA + AMP + diphosphate. The catalysed reaction is (E)-4-coumarate + ATP + H(+) = (E)-4-coumaroyl-AMP + diphosphate. It carries out the reaction (E)-4-coumaroyl-AMP + CoA = (E)-4-coumaroyl-CoA + AMP + H(+). It participates in phytoalexin biosynthesis; 3,4',5-trihydroxystilbene biosynthesis; 3,4',5-trihydroxystilbene from trans-4-coumarate: step 1/2. Carboxylate--CoA ligase that may use 4-coumarate as substrate. Follows a two-step reaction mechanism, wherein the carboxylate substrate first undergoes adenylation by ATP, followed by a thioesterification in the presence of CoA to yield the final CoA thioester. This is Probable 4-coumarate--CoA ligase 1 (4cl1) from Dictyostelium discoideum (Social amoeba).